A 346-amino-acid polypeptide reads, in one-letter code: Thiamine-phosphate synthase (346 aa).

Positions M1–E125 are unknown. The interval I126–K346 is thiamine-phosphate synthase. 4-amino-2-methyl-5-(diphosphooxymethyl)pyrimidine-binding positions include Q177–K181 and N209. Positions 210 and 229 each coordinate Mg(2+). S248 contributes to the 4-amino-2-methyl-5-(diphosphooxymethyl)pyrimidine binding site. Residue T274–S276 participates in 2-[(2R,5Z)-2-carboxy-4-methylthiazol-5(2H)-ylidene]ethyl phosphate binding. Residue K277 coordinates 4-amino-2-methyl-5-(diphosphooxymethyl)pyrimidine. Position 304 (G304) interacts with 2-[(2R,5Z)-2-carboxy-4-methylthiazol-5(2H)-ylidene]ethyl phosphate.

This sequence belongs to the thiamine-phosphate synthase family. The cofactor is Mg(2+).

The catalysed reaction is 2-[(2R,5Z)-2-carboxy-4-methylthiazol-5(2H)-ylidene]ethyl phosphate + 4-amino-2-methyl-5-(diphosphooxymethyl)pyrimidine + 2 H(+) = thiamine phosphate + CO2 + diphosphate. It catalyses the reaction 2-(2-carboxy-4-methylthiazol-5-yl)ethyl phosphate + 4-amino-2-methyl-5-(diphosphooxymethyl)pyrimidine + 2 H(+) = thiamine phosphate + CO2 + diphosphate. It carries out the reaction 4-methyl-5-(2-phosphooxyethyl)-thiazole + 4-amino-2-methyl-5-(diphosphooxymethyl)pyrimidine + H(+) = thiamine phosphate + diphosphate. The protein operates within cofactor biosynthesis; thiamine diphosphate biosynthesis; thiamine phosphate from 4-amino-2-methyl-5-diphosphomethylpyrimidine and 4-methyl-5-(2-phosphoethyl)-thiazole: step 1/1. Condenses 4-methyl-5-(beta-hydroxyethyl)thiazole monophosphate (THZ-P) and 2-methyl-4-amino-5-hydroxymethyl pyrimidine pyrophosphate (HMP-PP) to form thiamine monophosphate (TMP). This Prochlorococcus marinus (strain SARG / CCMP1375 / SS120) protein is Thiamine-phosphate synthase.